Here is a 205-residue protein sequence, read N- to C-terminus: Ypt/Rab-type GTPase ypt7 (205 aa).

GTP is bound by residues 17-23 (SGVGKTS), 33-40 (FSASYKAT), glycine 66, 125-128 (NKID), and 157-159 (SAK). The short motif at 37–45 (YKATIGADF) is the Effector region element. S-geranylgeranyl cysteine attachment occurs at residues cysteine 203 and cysteine 205. Position 205 is a cysteine methyl ester (cysteine 205).

The protein belongs to the small GTPase superfamily. Rab family. In terms of assembly, interacts with the Rab GDP dissociation inhibitor GDI1.

The protein localises to the vacuole. Its activity is regulated as follows. Rab activation is generally mediated by a guanine exchange factor (GEF), while inactivation through hydrolysis of bound GTP is catalyzed by a GTPase activating protein (GAP). In terms of biological role, ypt/Rab-type GTPases are key regulators of membrane trafficking and intracellular vesicular transport. They act as molecular switches that convert between GTP-bound and GDP-bound states, and regulate virtually all steps of membrane traffic from the formation of the transport vesicle at the donor membrane to its fusion at the target membrane. In the GDP-bound state, Ypt proteins are predominantly cytosolic, solubilized through the interaction with a GDP dissociation inhibitor (GDI). In the GTP-bound state, the proteins are membrane bound and interact with specific effector proteins that select cargo, promote vesicle movement, or verify the correct site of fusion. Required for fungal morphogenesis, vacuole fusion, autophagy, stress resistance and pathogenicity. The protein is Ypt/Rab-type GTPase ypt7 of Pyricularia oryzae (strain 70-15 / ATCC MYA-4617 / FGSC 8958) (Rice blast fungus).